We begin with the raw amino-acid sequence, 666 residues long: Magnesium-chelatase 67 kDa subunit (666 aa).

37–44 (GRRGTGKT) is a binding site for ATP. Residues 327–367 (LPDEEEQMQPPPPPPPPPPPPEPDKPDDPETPPDEAPKDEQ) are disordered. Positions 335 to 347 (QPPPPPPPPPPPP) are enriched in pro residues. Residues 475-661 (LIIFVVDASG…SLAETVKSGV (187 aa)) enclose the VWFA domain.

It belongs to the Mg-chelatase subunits D/I family.

The enzyme catalyses protoporphyrin IX + Mg(2+) + ATP + H2O = Mg-protoporphyrin IX + ADP + phosphate + 3 H(+). The protein operates within porphyrin-containing compound metabolism; bacteriochlorophyll biosynthesis. In terms of biological role, involved in bacteriochlorophyll biosynthesis; introduces a magnesium ion into protoporphyrin IX to yield Mg-protoporphyrin IX. This chain is Magnesium-chelatase 67 kDa subunit (bchD), found in Heliobacterium mobile (Heliobacillus mobilis).